The chain runs to 158 residues: Phosphopantetheine adenylyltransferase (158 aa).

S9 lines the substrate pocket. ATP is bound by residues 9 to 10 and H17; that span reads SF. Substrate is bound by residues K41, V73, and K87. ATP contacts are provided by residues 88-90, E98, and 122-128; these read GLR and YSFVSSS.

Belongs to the bacterial CoaD family. As to quaternary structure, homohexamer. Mg(2+) is required as a cofactor.

It localises to the cytoplasm. It carries out the reaction (R)-4'-phosphopantetheine + ATP + H(+) = 3'-dephospho-CoA + diphosphate. Its pathway is cofactor biosynthesis; coenzyme A biosynthesis; CoA from (R)-pantothenate: step 4/5. Functionally, reversibly transfers an adenylyl group from ATP to 4'-phosphopantetheine, yielding dephospho-CoA (dPCoA) and pyrophosphate. The chain is Phosphopantetheine adenylyltransferase from Mycolicibacterium smegmatis (strain ATCC 700084 / mc(2)155) (Mycobacterium smegmatis).